A 325-amino-acid polypeptide reads, in one-letter code: Glyoxylate/hydroxypyruvate reductase B (325 aa).

Residues Arg-237 and Glu-266 contribute to the active site. The active-site Proton donor is His-285.

The protein belongs to the D-isomer specific 2-hydroxyacid dehydrogenase family. GhrB subfamily. In terms of assembly, homodimer.

It localises to the cytoplasm. It carries out the reaction glycolate + NADP(+) = glyoxylate + NADPH + H(+). It catalyses the reaction (R)-glycerate + NAD(+) = 3-hydroxypyruvate + NADH + H(+). The catalysed reaction is (R)-glycerate + NADP(+) = 3-hydroxypyruvate + NADPH + H(+). In terms of biological role, catalyzes the NADPH-dependent reduction of glyoxylate and hydroxypyruvate into glycolate and glycerate, respectively. The protein is Glyoxylate/hydroxypyruvate reductase B of Serratia proteamaculans (strain 568).